The primary structure comprises 212 residues: dTTP/UTP pyrophosphatase (212 aa).

Asp-88 serves as the catalytic Proton acceptor.

It belongs to the Maf family. YhdE subfamily. It depends on a divalent metal cation as a cofactor.

The protein localises to the cytoplasm. It carries out the reaction dTTP + H2O = dTMP + diphosphate + H(+). The enzyme catalyses UTP + H2O = UMP + diphosphate + H(+). Nucleoside triphosphate pyrophosphatase that hydrolyzes dTTP and UTP. May have a dual role in cell division arrest and in preventing the incorporation of modified nucleotides into cellular nucleic acids. The chain is dTTP/UTP pyrophosphatase from Colwellia psychrerythraea (strain 34H / ATCC BAA-681) (Vibrio psychroerythus).